The primary structure comprises 588 residues: Mediator of RNA polymerase II transcription subunit 26 (588 aa).

A TFIIS N-terminal domain is found at glutamine 10 to valine 87. Disordered regions lie at residues arginine 112–asparagine 393 and lysine 412–glutamine 441. Over residues serine 123–isoleucine 133 the composition is skewed to basic and acidic residues. Positions proline 179 to serine 191 are enriched in polar residues. Positions serine 207–serine 218 are enriched in basic and acidic residues. The segment covering serine 314–proline 325 has biased composition (pro residues). Phosphoserine is present on residues serine 435 and serine 458.

This sequence belongs to the Mediator complex subunit 26 family. In terms of assembly, component of the Mediator complex, which is composed of MED1, MED4, MED6, MED7, MED8, MED9, MED10, MED11, MED12, MED13, MED13L, MED14, MED15, MED16, MED17, MED18, MED19, MED20, MED21, MED22, MED23, MED24, MED25, MED26, MED27, MED29, MED30, MED31, CCNC, CDK8 and CDC2L6/CDK11. The MED12, MED13, CCNC and CDK8 subunits form a distinct module termed the CDK8 module. Mediator containing the CDK8 module is less active than Mediator lacking this module in supporting transcriptional activation. Individual preparations of the Mediator complex lacking one or more distinct subunits have been variously termed ARC, CRSP, DRIP, PC2, SMCC and TRAP. Interacts with CEBPB (when not methylated).

It localises to the nucleus. In terms of biological role, component of the Mediator complex, a coactivator involved in the regulated transcription of nearly all RNA polymerase II-dependent genes. Mediator functions as a bridge to convey information from gene-specific regulatory proteins to the basal RNA polymerase II transcription machinery. Mediator is recruited to promoters by direct interactions with regulatory proteins and serves as a scaffold for the assembly of a functional pre-initiation complex with RNA polymerase II and the general transcription factors. This chain is Mediator of RNA polymerase II transcription subunit 26 (Med26), found in Mus musculus (Mouse).